A 249-amino-acid polypeptide reads, in one-letter code: Ribosomal RNA small subunit methyltransferase J (249 aa).

Position 169 (Asp-169) interacts with S-adenosyl-L-methionine.

The protein belongs to the methyltransferase superfamily. RsmJ family.

The protein localises to the cytoplasm. It carries out the reaction guanosine(1516) in 16S rRNA + S-adenosyl-L-methionine = N(2)-methylguanosine(1516) in 16S rRNA + S-adenosyl-L-homocysteine + H(+). Functionally, specifically methylates the guanosine in position 1516 of 16S rRNA. The protein is Ribosomal RNA small subunit methyltransferase J of Buchnera aphidicola subsp. Schizaphis graminum (strain Sg).